The chain runs to 526 residues: Dye-decolorizing peroxidase (526 aa).

The first 21 residues, 1-21 (MRKSISTFILLSVLSVGQLVA), serve as a signal peptide directing secretion. A propeptide spanning residues 22-63 (ARPRSTNAPPRRRTPQPRRTTSLFINPPALPDLPTVQAVDKL) is cleaved from the precursor. The N-linked (GlcNAc...) asparagine glycan is linked to Asn186. Asp231 acts as the Proton acceptor in catalysis. Asn367 carries N-linked (GlcNAc...) asparagine glycosylation. His376 provides a ligand contact to heme. 2 N-linked (GlcNAc...) asparagine glycosylation sites follow: Asn473 and Asn484.

Belongs to the DyP-type peroxidase family. Heme b is required as a cofactor.

Its subcellular location is the secreted. It catalyses the reaction Reactive Blue 5 + 2 H2O2 = 2,2'-disulfonyl azobenzene + 3-[(4-amino-6-chloro-1,3,5-triazin-2-yl)amino]benzenesulfonate + phthalate + 2 H2O + 2 H(+). It carries out the reaction 2 a phenolic donor + H2O2 = 2 a phenolic radical donor + 2 H2O. Manganese-independent peroxidase that is able to convert a large number of compounds, but its physiological substrate is not known. In addition to classic peroxidase substrates (e.g. 2,6-dimethoxyphenol), oxidizes dyes such as Reactive Blue 5 and Reactive Black 5. The polypeptide is Dye-decolorizing peroxidase (Mycena epipterygia (Yellow-stemmed mycena)).